Reading from the N-terminus, the 242-residue chain is MGHKINPTGLRLGITQEHRSRWYASSKNYPALLQEDDRIRKFIHKKYGSAGISDVLIARKADQLEVELKTARPGVLVGRQGSGIEELRSGIQKTIGDSSRQVRINVVEVERVDGDAFLLAEYIAQQLEKRVAFRRTIRMAVQRAQRAGVLGLKIQVSGRLNGAEIARTEWTREGRVPLHTLRADIDYATKVASTTYGVLGIKVWVFKGEVLSEQAQPMPVGAAPRRRASRRPQQFEDRSNEG.

Residues 39 to 110 enclose the KH type-2 domain; it reads IRKFIHKKYG…QVRINVVEVE (72 aa). Residues 216-242 are disordered; sequence QPMPVGAAPRRRASRRPQQFEDRSNEG. Basic and acidic residues predominate over residues 233–242; sequence QQFEDRSNEG.

It belongs to the universal ribosomal protein uS3 family. In terms of assembly, part of the 30S ribosomal subunit. Forms a tight complex with proteins S10 and S14.

Its function is as follows. Binds the lower part of the 30S subunit head. Binds mRNA in the 70S ribosome, positioning it for translation. The chain is Small ribosomal subunit protein uS3 from Synechococcus sp. (strain CC9605).